An 84-amino-acid polypeptide reads, in one-letter code: Transmembrane protein EP84R (84 aa).

The next 2 membrane-spanning stretches (helical) occupy residues 31–51 and 60–80; these read VIGV…IIIL and AASI…FLIY.

Belongs to the asfivirus EP84R family.

It localises to the virion membrane. The sequence is that of Transmembrane protein EP84R from Ornithodoros (relapsing fever ticks).